Here is a 547-residue protein sequence, read N- to C-terminus: Chaperonin GroEL (547 aa).

ATP is bound by residues 30-33, lysine 51, 87-91, glycine 415, 479-481, and aspartate 495; these read TLGP, DGTTT, and NAA.

The protein belongs to the chaperonin (HSP60) family. In terms of assembly, forms a cylinder of 14 subunits composed of two heptameric rings stacked back-to-back. Interacts with the co-chaperonin GroES.

The protein localises to the cytoplasm. The enzyme catalyses ATP + H2O + a folded polypeptide = ADP + phosphate + an unfolded polypeptide.. In terms of biological role, together with its co-chaperonin GroES, plays an essential role in assisting protein folding. The GroEL-GroES system forms a nano-cage that allows encapsulation of the non-native substrate proteins and provides a physical environment optimized to promote and accelerate protein folding. The protein is Chaperonin GroEL of Bordetella bronchiseptica (strain ATCC BAA-588 / NCTC 13252 / RB50) (Alcaligenes bronchisepticus).